Reading from the N-terminus, the 75-residue chain is Dermaseptin-related peptide (75 aa).

A signal peptide spans 1–22; that stretch reads MAFLNKSLLLVLFLGLVSLSIC. The propeptide occupies 23–43; sequence EEERRENEDEEEQEDDEQSEM. Positions 24–44 are disordered; the sequence is EERRENEDEEEQEDDEQSEMR. Over residues 30–40 the composition is skewed to acidic residues; it reads EDEEEQEDDEQ. Position 72 is a glutamine amide (Gln-72). A propeptide spanning residues 74–75 is cleaved from the precursor; that stretch reads EQ.

Expressed by the skin glands.

The protein localises to the secreted. In terms of biological role, has antibacterial activity against Gram-positive bacterium M.luteus NCT C2665 but not against Gram-negative bacterium E.coli K12D31. The protein is Dermaseptin-related peptide of Agalychnis callidryas (Red-eyed tree frog).